We begin with the raw amino-acid sequence, 386 residues long: Aspergillopepsin-1 (386 aa).

A signal peptide spans 1–20 (MVVFSKVAAAAFGLSAVASA). The propeptide at 21-69 (MPAAPPRQGFTINQLTRAIPKRTINLPAIYANALSKYGGNVPPHIQDAM) is activation peptide. One can recognise a Peptidase A1 domain in the interval 85-383 (YLTPVAVGGT…DSEGPQLGFA (299 aa)). The active site involves D101. Residue N130 is glycosylated (N-linked (GlcNAc...) asparagine). D275 is a catalytic residue. The cysteines at positions 311 and 346 are disulfide-linked.

This sequence belongs to the peptidase A1 family. As to quaternary structure, monomer.

It is found in the secreted. It carries out the reaction Hydrolysis of proteins with broad specificity. Generally favors hydrophobic residues in P1 and P1', but also accepts Lys in P1, which leads to activation of trypsinogen. Does not clot milk.. Functionally, secreted aspartic endopeptidase that allows assimilation of proteinaceous substrates. The scissile peptide bond is attacked by a nucleophilic water molecule activated by two aspartic residues in the active site. Shows a broad primary substrate specificity. Favors hydrophobic residues at the P1 and P1' positions, but also accepts a lysine residue in the P1 position, leading to the activation of trypsinogen and chymotrypsinogen A. In Emericella nidulans (strain FGSC A4 / ATCC 38163 / CBS 112.46 / NRRL 194 / M139) (Aspergillus nidulans), this protein is Aspergillopepsin-1.